Reading from the N-terminus, the 141-residue chain is Large ribosomal subunit protein uL14 (141 aa).

Belongs to the universal ribosomal protein uL14 family.

The sequence is that of Large ribosomal subunit protein uL14 (RPL23) from Tetrahymena thermophila (strain SB210).